The sequence spans 317 residues: Peroxidase 64 (317 aa).

A signal peptide spans 1–22 (MNAHMLNLLVIVIFVVSFDVQA). Cystine bridges form between cysteine 32–cysteine 111, cysteine 65–cysteine 70, cysteine 117–cysteine 313, and cysteine 195–cysteine 227. The active-site Proton acceptor is the histidine 63. The Ca(2+) site is built by aspartate 64, valine 67, glycine 69, aspartate 71, and serine 73. Proline 158 is a substrate binding site. N-linked (GlcNAc...) asparagine glycosylation occurs at asparagine 163. Residue histidine 188 participates in heme b binding. Threonine 189 is a Ca(2+) binding site. The Ca(2+) site is built by aspartate 241, threonine 243, and aspartate 248.

It belongs to the peroxidase family. Classical plant (class III) peroxidase subfamily. Heme b serves as cofactor. Ca(2+) is required as a cofactor. In terms of tissue distribution, expressed in the whole plant, but preferentially in roots.

The protein localises to the secreted. It carries out the reaction 2 a phenolic donor + H2O2 = 2 a phenolic radical donor + 2 H2O. Removal of H(2)O(2), oxidation of toxic reductants, biosynthesis and degradation of lignin, suberization, auxin catabolism, response to environmental stresses such as wounding, pathogen attack and oxidative stress. These functions might be dependent on each isozyme/isoform in each plant tissue. The chain is Peroxidase 64 (PER64) from Arabidopsis thaliana (Mouse-ear cress).